A 64-amino-acid chain; its full sequence is Putative antitoxin MJ0975 (64 aa).

It belongs to the UPF0165 family.

Possibly the antitoxin component of a type II toxin-antitoxin (TA) system. Its cognate toxin is VapC2 (Potential). This is Putative antitoxin MJ0975 (vapB2) from Methanocaldococcus jannaschii (strain ATCC 43067 / DSM 2661 / JAL-1 / JCM 10045 / NBRC 100440) (Methanococcus jannaschii).